The sequence spans 130 residues: MASVKLASLIVLFATLGMFLTKNVGAASCNGVCSPFEMPPCGTSACRCIPVGLFIGYCRNPSGVFLKANDEHPNLCESDADCRKKGSGNFCGHYPNPDIEYGWCFASKSEAEDFFSKITPKDLLKSVSTA.

A signal peptide spans 1 to 26 (MASVKLASLIVLFATLGMFLTKNVGA). 3 disulfides stabilise this stretch: C29–C46, C33–C48, and C41–C58. 2 consecutive propeptides follow at residues 64 to 69 (VFLKAN) and 123 to 130 (LLKSVSTA).

In terms of processing, the C-terminal glycine may be removed from PA1b. In terms of tissue distribution, major component of both the cotyledons and embryonic axes of mature seeds.

Its function is as follows. PA1b binds to basic 7S globulin (BG) and stimulates its phosphorylation activity. Involved in the signal transduction system to regulate the growth and differentiation as a hormone peptide. Toxic to various insects through binding to a high affinity binding site in the insect gut. The polypeptide is Albumin-1 D (Pisum sativum (Garden pea)).